Here is a 348-residue protein sequence, read N- to C-terminus: Protein arginine N-methyltransferase 1 (348 aa).

The region spanning 20-322 (EQHYFNSYDH…EKNNRDLNIK (303 aa)) is the SAM-dependent MTase PRMT-type domain. S-adenosyl-L-methionine-binding residues include H33, R42, G66, D88, and E117. Active-site residues include E132 and E141.

It belongs to the class I-like SAM-binding methyltransferase superfamily. Protein arginine N-methyltransferase family. As to quaternary structure, homodimer. The dimers can then associate to form a ring-shaped homohexamer. Interacts with NPL3, BRE5, MTR4, SNF2, SUM1, and SSD1.

The protein resides in the nucleus. It carries out the reaction L-arginyl-[protein] + S-adenosyl-L-methionine = N(omega)-methyl-L-arginyl-[protein] + S-adenosyl-L-homocysteine + H(+). It catalyses the reaction L-arginyl-[protein] + 2 S-adenosyl-L-methionine = N(omega),N(omega)-dimethyl-L-arginyl-[protein] + 2 S-adenosyl-L-homocysteine + 2 H(+). In terms of biological role, S-adenosyl-L-methionine-dependent protein-arginine N-methyltransferase that catalyzes both the mono- and asymmetric (type I) dimethylation of the guanidino nitrogens of arginine residues in a variety of RNA-binding proteins such as heterogeneous nuclear ribonucleoproteins (hnRNPs) and small nuclear ribonucleoproteins (snRNPs). Methylates NAB2, NPL3, HRP1 and YRA1, shuttling hnRNPs involved in mRNA processing and export, facilitating their export out of the nucleus. Methylation of NPL3 weakens its interaction with THO2, a component of the TREX (transcription/export) complex important for transcriptional elongation and recruitment of mRNA export factors. Methylates the hnRNP HRB1, but does not influence its subcellular location. Methylates the nucleolar proteins GAR1, NOP1 and NSR1. Methylates the snRNP SNP1 and modulates the cotranscriptional recruitment of splicing factors. Dimethylates free histone H4 (HHF1/HHF2) at 'Arg-4' (H4R3me2a) and plays a role in preservation and establishment of silent chromatin domains. Mono- and dimethylates ribosomal protein S2 (RPS2) at 'Arg-11'. Methylates the catalytic subunit of the SWI/SNF chromatin-remodeling complex SNF2. This chain is Protein arginine N-methyltransferase 1, found in Saccharomyces cerevisiae (strain ATCC 204508 / S288c) (Baker's yeast).